The primary structure comprises 491 residues: Malonate-semialdehyde dehydrogenase 1 (491 aa).

Residues A154, F156, K180, E183, R184, S233, and T255 each coordinate NAD(+). The active-site Nucleophile is C288. E386 provides a ligand contact to NAD(+).

The protein belongs to the aldehyde dehydrogenase family. IolA subfamily. In terms of assembly, homotetramer.

It carries out the reaction 3-oxopropanoate + NAD(+) + CoA + H2O = hydrogencarbonate + acetyl-CoA + NADH + H(+). The enzyme catalyses 2-methyl-3-oxopropanoate + NAD(+) + CoA + H2O = propanoyl-CoA + hydrogencarbonate + NADH + H(+). It functions in the pathway polyol metabolism; myo-inositol degradation into acetyl-CoA; acetyl-CoA from myo-inositol: step 7/7. In terms of biological role, catalyzes the oxidation of malonate semialdehyde (MSA) and methylmalonate semialdehyde (MMSA) into acetyl-CoA and propanoyl-CoA, respectively. Is involved in a myo-inositol catabolic pathway. Bicarbonate, and not CO2, is the end-product of the enzymatic reaction. In Shouchella clausii (strain KSM-K16) (Alkalihalobacillus clausii), this protein is Malonate-semialdehyde dehydrogenase 1.